Reading from the N-terminus, the 162-residue chain is MANPEFYGLSTTTLSGQPFPFKDLEGKAVLIVNVASKCGFTPQYKGLEELYQQYKDRGLVILGFPCNQFGGQEPGDASAIGEFCQRNFGVTFPIMEKSDVNGNDANPVFKYLKSQKKQFMMEMIKWNFEKFLVDKSGQVVARFSSMATPASLAPEIEKVLNA.

The residue at position 38 (C38) is an S-selanylcysteine. Residue N87 is part of the active site.

It belongs to the glutathione peroxidase family. Cys-87 is S-selanylated when selenium levels are high. S-selanylation may increase or be important for glutathione peroxidase activity.

It localises to the cytoplasm. It catalyses the reaction 2 glutathione + H2O2 = glutathione disulfide + 2 H2O. The catalysed reaction is a hydroperoxide + [thioredoxin]-dithiol = an alcohol + [thioredoxin]-disulfide + H2O. Its function is as follows. Has thioredoxin peroxidase activity. May also have glutathione peroxidase activity, although this activity is controversial. Protects cells against reactive oxygen species, which may include photooxidative stress, hydrogen peroxide and organic hydroperoxides. The chain is Glutathione peroxidase-like peroxiredoxin GPX5 from Chlamydomonas reinhardtii (Chlamydomonas smithii).